A 257-amino-acid polypeptide reads, in one-letter code: NH(3)-dependent NAD(+) synthetase (257 aa).

An ATP-binding site is contributed by 32 to 39 (GLSGGVDS). Residue Asp-38 participates in Mg(2+) binding. Residue Arg-113 participates in deamido-NAD(+) binding. Thr-133 contributes to the ATP binding site. Mg(2+) is bound at residue Glu-138. Positions 162 and 184 each coordinate ATP.

It belongs to the NAD synthetase family. As to quaternary structure, homodimer.

The enzyme catalyses deamido-NAD(+) + NH4(+) + ATP = AMP + diphosphate + NAD(+) + H(+). It participates in cofactor biosynthesis; NAD(+) biosynthesis; NAD(+) from deamido-NAD(+) (ammonia route): step 1/1. Its function is as follows. Catalyzes the ATP-dependent amidation of deamido-NAD to form NAD. Uses ammonia as a nitrogen source. This chain is NH(3)-dependent NAD(+) synthetase, found in Wolinella succinogenes (strain ATCC 29543 / DSM 1740 / CCUG 13145 / JCM 31913 / LMG 7466 / NCTC 11488 / FDC 602W) (Vibrio succinogenes).